A 398-amino-acid polypeptide reads, in one-letter code: 4-hydroxy-3-methylbut-2-enyl diphosphate reductase (398 aa).

C66 contacts [4Fe-4S] cluster. (2E)-4-hydroxy-3-methylbut-2-enyl diphosphate is bound at residue H96. Dimethylallyl diphosphate is bound at residue H96. H96 lines the isopentenyl diphosphate pocket. C157 contacts [4Fe-4S] cluster. (2E)-4-hydroxy-3-methylbut-2-enyl diphosphate is bound at residue H185. H185 lines the dimethylallyl diphosphate pocket. Residue H185 participates in isopentenyl diphosphate binding. Residue E187 is the Proton donor of the active site. T250 provides a ligand contact to (2E)-4-hydroxy-3-methylbut-2-enyl diphosphate. C288 serves as a coordination point for [4Fe-4S] cluster. Residues S317, S318, N319, and S379 each coordinate (2E)-4-hydroxy-3-methylbut-2-enyl diphosphate. Residues S317, S318, N319, and S379 each contribute to the dimethylallyl diphosphate site. Isopentenyl diphosphate-binding residues include S317, S318, N319, and S379.

This sequence belongs to the IspH family. The cofactor is [4Fe-4S] cluster.

It catalyses the reaction isopentenyl diphosphate + 2 oxidized [2Fe-2S]-[ferredoxin] + H2O = (2E)-4-hydroxy-3-methylbut-2-enyl diphosphate + 2 reduced [2Fe-2S]-[ferredoxin] + 2 H(+). The enzyme catalyses dimethylallyl diphosphate + 2 oxidized [2Fe-2S]-[ferredoxin] + H2O = (2E)-4-hydroxy-3-methylbut-2-enyl diphosphate + 2 reduced [2Fe-2S]-[ferredoxin] + 2 H(+). The protein operates within isoprenoid biosynthesis; dimethylallyl diphosphate biosynthesis; dimethylallyl diphosphate from (2E)-4-hydroxy-3-methylbutenyl diphosphate: step 1/1. It functions in the pathway isoprenoid biosynthesis; isopentenyl diphosphate biosynthesis via DXP pathway; isopentenyl diphosphate from 1-deoxy-D-xylulose 5-phosphate: step 6/6. Its function is as follows. Catalyzes the conversion of 1-hydroxy-2-methyl-2-(E)-butenyl 4-diphosphate (HMBPP) into a mixture of isopentenyl diphosphate (IPP) and dimethylallyl diphosphate (DMAPP). Acts in the terminal step of the DOXP/MEP pathway for isoprenoid precursor biosynthesis. The chain is 4-hydroxy-3-methylbut-2-enyl diphosphate reductase from Synechococcus sp. (strain ATCC 27144 / PCC 6301 / SAUG 1402/1) (Anacystis nidulans).